We begin with the raw amino-acid sequence, 22 residues long: GLWEKIKEKANELVSGIVEGVK.

Lysine amide is present on Lys22.

Expressed by the skin parotoid and/or rostral glands.

It localises to the secreted. Its function is as follows. Antibacterial peptide, that adopts an alpha helical conformation which can disrupt bacterial membranes. Each caerin displays a different antimicrobial specificity. The polypeptide is Caerin-3.3 (Ranoidea caerulea (Green tree frog)).